The chain runs to 496 residues: Galactan beta-1,4-galactosyltransferase GALS1 (496 aa).

Residues 22–42 (IIATLLALSLVMIVWNLPPYY) traverse the membrane as a helical segment. The region spanning 232–464 (DYLYCGSSLY…AKKKVTLYNK (233 aa)) is the GT92 domain.

It belongs to the glycosyltransferase 92 family. As to expression, expressed in root vasculature, mature leaves, trichomes, flowers, siliques and seeds.

It localises to the golgi apparatus membrane. Functionally, involved in the biosynthesis of beta-1,4-galactan. Can transfer galactose residues from UDP-galactose to beta-1,4-galactopentaose in vitro. Forms specifically beta-1,4-galactosyl linkages and can add successive beta-1,4-galactosyl residues to the acceptor. Beta-1,4-galactans are abundant polysaccharides in plant cell walls and are found as side-chain of rhamnogalacturonan I, which is a major component of pectin. The protein is Galactan beta-1,4-galactosyltransferase GALS1 of Arabidopsis thaliana (Mouse-ear cress).